A 419-amino-acid polypeptide reads, in one-letter code: UPF0242 protein TC_0906 (419 aa).

It belongs to the UPF0242 family.

The chain is UPF0242 protein TC_0906 from Chlamydia muridarum (strain MoPn / Nigg).